The primary structure comprises 392 residues: Protein O-glucosyltransferase 1 (392 aa).

The first 23 residues, 1–23 (MERLSGCRLRPWMLLLLLFPVQG), serve as a signal peptide directing secretion. Disulfide bonds link C49–C56, C54–C357, C102–C108, and C263–C286. N-linked (GlcNAc...) asparagine glycosylation is present at N53. The tract at residues 103–107 (MFPSR) is interaction with the consensus sequence C-X-S-X-[PA]-C in peptide substrates. The active-site Proton donor/acceptor is the D133. The interaction with the consensus sequence C-X-S-X-[PA]-C in peptide substrates stretch occupies residues 172 to 178 (AVWPLYP). Y177 is a binding site for UDP-alpha-D-glucose. The N-linked (GlcNAc...) asparagine glycan is linked to N204. Residues S212, R218, and 274–279 (VAASFR) contribute to the UDP-alpha-D-glucose site. N-linked (GlcNAc...) asparagine glycosylation occurs at N373. The Prevents secretion from ER signature appears at 389-392 (KTEL).

The protein belongs to the glycosyltransferase 90 family.

Its subcellular location is the endoplasmic reticulum lumen. It catalyses the reaction L-seryl-[EGF-like domain protein] + UDP-alpha-D-xylose = 3-O-(beta-D-xylosyl)-L-seryl-[EGF-like domain protein] + UDP + H(+). It carries out the reaction L-seryl-[EGF-like domain protein] + UDP-alpha-D-glucose = 3-O-(beta-D-glucosyl)-L-seryl-[EGF-like domain protein] + UDP + H(+). It participates in protein modification; protein glycosylation. In terms of biological role, dual specificity glycosyltransferase that catalyzes the transfer of glucose and xylose from UDP-glucose and UDP-xylose, respectively, to a serine residue found in the consensus sequence of C-X-S-X-P-C. Specifically targets extracellular EGF repeats of protein such as CRB2, F7, F9 and NOTCH2. Acts as a positive regulator of Notch signaling by mediating O-glucosylation of Notch, leading to regulate muscle development. Notch glucosylation does not affect Notch ligand binding. Required during early development to promote gastrulation: acts by mediating O-glucosylation of CRB2, which is required for CRB2 localization to the cell membrane. This chain is Protein O-glucosyltransferase 1 (Poglut1), found in Rattus norvegicus (Rat).